A 164-amino-acid polypeptide reads, in one-letter code: Peroxynitrite isomerase 2 (164 aa).

Residues 17–23 (GSWAGRG) carry the GXWXGXG motif. Residue His155 coordinates heme b.

This sequence belongs to the nitrobindin family. In terms of assembly, homodimer. It depends on heme b as a cofactor.

The catalysed reaction is peroxynitrite = nitrate. It functions in the pathway nitrogen metabolism. Its function is as follows. Heme-binding protein able to scavenge peroxynitrite and to protect free L-tyrosine against peroxynitrite-mediated nitration, by acting as a peroxynitrite isomerase that converts peroxynitrite to nitrate. Therefore, this protein likely plays a role in peroxynitrite sensing and in the detoxification of reactive nitrogen and oxygen species (RNS and ROS, respectively). Is able to bind nitric oxide (NO) in vitro, but may act as a sensor of peroxynitrite levels in vivo. The sequence is that of Peroxynitrite isomerase 2 from Mycobacterium bovis (strain BCG / Pasteur 1173P2).